The sequence spans 799 residues: Ribosome-releasing factor 2, mitochondrial (799 aa).

The tr-type G domain maps to 19 to 306 (SKIRNIGIIA…AVVNYLPSPL (288 aa)). GTP contacts are provided by residues 28–35 (AHIDAGKT), 93–97 (DTPGH), and 145–148 (NKMD).

It belongs to the TRAFAC class translation factor GTPase superfamily. Classic translation factor GTPase family. EF-G/EF-2 subfamily.

Its subcellular location is the mitochondrion. Mitochondrial GTPase that mediates the disassembly of ribosomes from messenger RNA at the termination of mitochondrial protein biosynthesis. Not involved in the GTP-dependent ribosomal translocation step during translation elongation. In Vanderwaltozyma polyspora (strain ATCC 22028 / DSM 70294 / BCRC 21397 / CBS 2163 / NBRC 10782 / NRRL Y-8283 / UCD 57-17) (Kluyveromyces polysporus), this protein is Ribosome-releasing factor 2, mitochondrial.